Consider the following 394-residue polypeptide: Ketoisovalerate oxidoreductase subunit VorA (394 aa).

As to quaternary structure, heterotetramer of one alpha, one beta, one delta and one gamma chain.

The catalysed reaction is 3-methyl-2-oxobutanoate + 2 oxidized [2Fe-2S]-[ferredoxin] + CoA = 2-methylpropanoyl-CoA + 2 reduced [2Fe-2S]-[ferredoxin] + CO2 + H(+). This is Ketoisovalerate oxidoreductase subunit VorA (vorA) from Pyrococcus horikoshii (strain ATCC 700860 / DSM 12428 / JCM 9974 / NBRC 100139 / OT-3).